The primary structure comprises 252 residues: Phosphate import ATP-binding protein PstB 1 (252 aa).

The ABC transporter domain occupies 6–247 (LQVSDLSVYY…PQHKETEDYI (242 aa)). Position 38-45 (38-45 (GPSGSGKS)) interacts with ATP.

It belongs to the ABC transporter superfamily. Phosphate importer (TC 3.A.1.7) family. In terms of assembly, the complex is composed of two ATP-binding proteins (PstB), two transmembrane proteins (PstC and PstA) and a solute-binding protein (PstS).

The protein resides in the cell membrane. It catalyses the reaction phosphate(out) + ATP + H2O = ADP + 2 phosphate(in) + H(+). In terms of biological role, part of the ABC transporter complex PstSACB involved in phosphate import. Responsible for energy coupling to the transport system. The polypeptide is Phosphate import ATP-binding protein PstB 1 (Streptococcus pneumoniae (strain ATCC BAA-255 / R6)).